The sequence spans 160 residues: Small ribosomal subunit protein uS7 (160 aa).

It belongs to the universal ribosomal protein uS7 family. As to quaternary structure, part of the 30S ribosomal subunit. Contacts proteins S9 and S11.

Its function is as follows. One of the primary rRNA binding proteins, it binds directly to 16S rRNA where it nucleates assembly of the head domain of the 30S subunit. Is located at the subunit interface close to the decoding center, probably blocks exit of the E-site tRNA. This Ehrlichia canis (strain Jake) protein is Small ribosomal subunit protein uS7.